The sequence spans 332 residues: Methionyl-tRNA formyltransferase (332 aa).

114-117 (SLLP) contributes to the (6S)-5,6,7,8-tetrahydrofolate binding site.

It belongs to the Fmt family.

The catalysed reaction is L-methionyl-tRNA(fMet) + (6R)-10-formyltetrahydrofolate = N-formyl-L-methionyl-tRNA(fMet) + (6S)-5,6,7,8-tetrahydrofolate + H(+). Functionally, attaches a formyl group to the free amino group of methionyl-tRNA(fMet). The formyl group appears to play a dual role in the initiator identity of N-formylmethionyl-tRNA by promoting its recognition by IF2 and preventing the misappropriation of this tRNA by the elongation apparatus. The polypeptide is Methionyl-tRNA formyltransferase (Corynebacterium aurimucosum (strain ATCC 700975 / DSM 44827 / CIP 107346 / CN-1) (Corynebacterium nigricans)).